The following is a 309-amino-acid chain: 15-cis-phytoene synthase (309 aa).

A disordered region spans residues 290-309; sequence LTSRMRAHPPRPAHLWQRPL.

Belongs to the phytoene/squalene synthase family. ATP is required as a cofactor. It depends on Mn(2+) as a cofactor. The cofactor is Mg(2+).

It carries out the reaction 2 (2E,6E,10E)-geranylgeranyl diphosphate = 15-cis-phytoene + 2 diphosphate. It participates in carotenoid biosynthesis; phytoene biosynthesis. With respect to regulation, inhibited by phosphate ions and squalestatin. In terms of biological role, involved in the biosynthesis of carotenoids. Catalyzes the condensation of two molecules of geranylgeranyl diphosphate (GGPP) to give prephytoene diphosphate (PPPP) and the subsequent rearrangement of the cyclopropylcarbinyl intermediate to yield the 15-cis-phytoene isomer. The sequence is that of 15-cis-phytoene synthase (crtB) from Pantoea ananas (Erwinia uredovora).